We begin with the raw amino-acid sequence, 239 residues long: Ribonuclease 3 (239 aa).

The region spanning arginine 12–glycine 137 is the RNase III domain. Position 50 (glutamate 50) interacts with Mg(2+). Aspartate 54 is a catalytic residue. 2 residues coordinate Mg(2+): aspartate 123 and glutamate 126. The active site involves glutamate 126. In terms of domain architecture, DRBM spans aspartate 162–isoleucine 231.

Belongs to the ribonuclease III family. As to quaternary structure, homodimer. Mg(2+) serves as cofactor.

The protein resides in the cytoplasm. The catalysed reaction is Endonucleolytic cleavage to 5'-phosphomonoester.. Digests double-stranded RNA. Involved in the processing of primary rRNA transcript to yield the immediate precursors to the large and small rRNAs (23S and 16S). Processes some mRNAs, and tRNAs when they are encoded in the rRNA operon. Processes pre-crRNA and tracrRNA of type II CRISPR loci if present in the organism. The protein is Ribonuclease 3 of Rhizobium rhizogenes (strain K84 / ATCC BAA-868) (Agrobacterium radiobacter).